The chain runs to 342 residues: Protein pelota homolog (342 aa).

This sequence belongs to the eukaryotic release factor 1 family. Pelota subfamily. As to quaternary structure, monomer. The cofactor is a divalent metal cation.

Its subcellular location is the cytoplasm. Its function is as follows. May function in recognizing stalled ribosomes, interact with stem-loop structures in stalled mRNA molecules, and effect endonucleolytic cleavage of the mRNA. May play a role in the release non-functional ribosomes and degradation of damaged mRNAs. Has endoribonuclease activity. This chain is Protein pelota homolog, found in Methanocorpusculum labreanum (strain ATCC 43576 / DSM 4855 / Z).